A 604-amino-acid chain; its full sequence is Putative O-acetyltransferase SACOL0978 (604 aa).

11 consecutive transmembrane segments (helical) span residues 15–35 (YIPGLDGLRAIAVLGIIIYHL), 43–63 (GFLGVDTFFVISGYLITSLLL), 85–105 (LLPAVIVLLMVVGTATLLLKS), 150–170 (AIEEQFYIFFPVILVTLLLTI), 176–196 (IGFIFWGVSIISLGLMMFIYS), 212–232 (LQTLLLGVILAFLWPPFKLKN), 240–260 (YVIDSIGSLSFIVLILLFFII), 267–287 (IYDGGFYLISILTLFIIASVV), 310–330 (YSLYLWHFAVISFVHSYYVDG), 332–352 (IPVYVYFIDISLTIIFAELSY), and 377–397 (FIRMAIVVTLLIPFMLILVGA). Active-site residues include Ser-459, Asp-581, and His-584.

Belongs to the acyltransferase 3 family.

It is found in the cell membrane. This Staphylococcus aureus (strain COL) protein is Putative O-acetyltransferase SACOL0978.